We begin with the raw amino-acid sequence, 228 residues long: UPF0758 protein CTC_02075 (228 aa).

The MPN domain occupies 106-228 (NITNPKDAAY…YISLKEKDIL (123 aa)). Residues H177, H179, and D190 each coordinate Zn(2+). Residues 177-190 (HNHPSGDTTPSKED) carry the JAMM motif motif.

This sequence belongs to the UPF0758 family.

This Clostridium tetani (strain Massachusetts / E88) protein is UPF0758 protein CTC_02075.